The chain runs to 159 residues: NADH-quinone oxidoreductase subunit I (159 aa).

4Fe-4S ferredoxin-type domains lie at 50–80 and 90–119; these read QRRY…IESE and KRYD…ETHI. Positions 60, 63, 66, 70, 99, 102, 105, and 109 each coordinate [4Fe-4S] cluster.

This sequence belongs to the complex I 23 kDa subunit family. As to quaternary structure, NDH-1 is composed of 14 different subunits. Subunits NuoA, H, J, K, L, M, N constitute the membrane sector of the complex. The cofactor is [4Fe-4S] cluster.

Its subcellular location is the cell inner membrane. The catalysed reaction is a quinone + NADH + 5 H(+)(in) = a quinol + NAD(+) + 4 H(+)(out). In terms of biological role, NDH-1 shuttles electrons from NADH, via FMN and iron-sulfur (Fe-S) centers, to quinones in the respiratory chain. The immediate electron acceptor for the enzyme in this species is believed to be ubiquinone. Couples the redox reaction to proton translocation (for every two electrons transferred, four hydrogen ions are translocated across the cytoplasmic membrane), and thus conserves the redox energy in a proton gradient. In Neisseria meningitidis serogroup A / serotype 4A (strain DSM 15465 / Z2491), this protein is NADH-quinone oxidoreductase subunit I.